Consider the following 193-residue polypeptide: Cytidylate kinase (193 aa).

12 to 20 (GLAGSGTTT) serves as a coordination point for ATP.

This sequence belongs to the cytidylate kinase family. Type 2 subfamily.

It is found in the cytoplasm. It carries out the reaction CMP + ATP = CDP + ADP. The catalysed reaction is dCMP + ATP = dCDP + ADP. The chain is Cytidylate kinase from Thermococcus sibiricus (strain DSM 12597 / MM 739).